We begin with the raw amino-acid sequence, 602 residues long: Glutaminase liver isoform, mitochondrial (602 aa).

A mitochondrion-targeting transit peptide spans 1 to 14 (MRSMRALQNALSRA). Disordered regions lie at residues 1-28 (MRSMRALQNALSRAGSHGQRGGWGHPSR) and 46-67 (QGRGTPHSHQPQHSDHDASNSG). Ser-219 provides a ligand contact to substrate. Position 253 is an N6-succinyllysine (Lys-253). A substrate-binding site is contributed by Asn-268. Residues Lys-279 and Lys-284 each carry the N6-acetyllysine modification. Positions 314 and 321 each coordinate substrate. Lys-329 carries the N6-acetyllysine modification. Substrate contacts are provided by Tyr-347, Tyr-399, and Val-417. 2 ANK repeats span residues 518–551 (DSRTALHVAAAEGHIDVVKFLIEACKVNPFVKDR) and 552–585 (WGNIPLDDAVQFNHLEVVKLLQDYHDSYMLSETQ).

It belongs to the glutaminase family. Homotetramer, dimer of dimers. Does not assemble into higher oligomers. Interacts with the PDZ domain of the syntrophin SNTA1. Interacts with the PDZ domain of TAX1BP3. Liver specific.

The protein resides in the mitochondrion. The enzyme catalyses L-glutamine + H2O = L-glutamate + NH4(+). Plays an important role in the regulation of glutamine catabolism. Promotes mitochondrial respiration and increases ATP generation in cells by catalyzing the synthesis of glutamate and alpha-ketoglutarate. Increases cellular anti-oxidant function via NADH and glutathione production. May play a role in preventing tumor proliferation. The protein is Glutaminase liver isoform, mitochondrial (Gls2) of Rattus norvegicus (Rat).